A 200-amino-acid chain; its full sequence is Small ribosomal subunit protein uS4 (200 aa).

Positions 22-42 (TGKELEKRPYAPGPHGPGQRK) are disordered. Positions 92–155 (TRLDNLVYRL…QNLAVVKESV (64 aa)) constitute an S4 RNA-binding domain.

This sequence belongs to the universal ribosomal protein uS4 family. In terms of assembly, part of the 30S ribosomal subunit. Contacts protein S5. The interaction surface between S4 and S5 is involved in control of translational fidelity.

In terms of biological role, one of the primary rRNA binding proteins, it binds directly to 16S rRNA where it nucleates assembly of the body of the 30S subunit. With S5 and S12 plays an important role in translational accuracy. The polypeptide is Small ribosomal subunit protein uS4 (Bacillus pumilus (strain SAFR-032)).